We begin with the raw amino-acid sequence, 626 residues long: Kinesin-like protein Klp59C (626 aa).

The globular stretch occupies residues 1-183 (MDKLSIEQKI…VRSGTTNERI (183 aa)). A disordered region spans residues 68–155 (CSGGNAASAN…GKNEDPGNPN (88 aa)). The span at 72–96 (NAASANQTASISPRSMKQRIATGSL) shows a compositional bias: polar residues. Low complexity predominate over residues 101-112 (ATAPPRQQTAPP). Residues 113–150 (VREDEVVHQAERMRKERERRREAQARTRLDREQGKNED) show a composition bias toward basic and acidic residues. Residues 115-150 (EDEVVHQAERMRKERERRREAQARTRLDREQGKNED) are a coiled coil. Residues 187-521 (QIMVCVRKRP…LRYADRVKEL (335 aa)) form the Kinesin motor domain. 277-284 (GQTGSGKT) serves as a coordination point for ATP. The interval 557-608 (ASSTSMPGGGNQAQQHTNTANDLNRSQKPTSKPTYPTSGQQLVQRKGSSQRE) is disordered.

The protein belongs to the TRAFAC class myosin-kinesin ATPase superfamily. Kinesin family. MCAK/KIF2 subfamily.

The protein localises to the chromosome. The protein resides in the centromere. Its subcellular location is the kinetochore. It localises to the cytoplasm. It is found in the cytoskeleton. The protein localises to the spindle pole. Functionally, required during anaphase to drive sister chromatid separation to actively depolymerize kinetochore microtubules at their kinetochore-associated plus ends, thereby contributing to chromatid mobility through a 'Pac-man' mechanism. This Drosophila melanogaster (Fruit fly) protein is Kinesin-like protein Klp59C (Klp59C).